Reading from the N-terminus, the 318-residue chain is Ribokinase (318 aa).

Residues 12–14 (NWD), 40–44 (GKAAN), and Glu-141 contribute to the substrate site. ATP is bound by residues Asn-188 and 235-240 (TLGGNG). Asp-264 and Ser-266 together coordinate K(+). Residue 269-270 (GD) coordinates ATP. Asp-270 is a binding site for substrate. Asp-270 functions as the Proton acceptor in the catalytic mechanism. Residues Ser-301, Arg-304, Gly-306, and Ser-310 each coordinate K(+).

It belongs to the carbohydrate kinase PfkB family. Ribokinase subfamily. As to quaternary structure, homodimer. Requires Mg(2+) as cofactor.

It is found in the cytoplasm. Its subcellular location is the nucleus. It catalyses the reaction D-ribose + ATP = D-ribose 5-phosphate + ADP + H(+). It participates in carbohydrate metabolism; D-ribose degradation; D-ribose 5-phosphate from beta-D-ribopyranose: step 2/2. Activated by a monovalent cation that binds near, but not in, the active site. The most likely occupant of the site in vivo is potassium. Ion binding induces a conformational change that may alter substrate affinity. Functionally, catalyzes the phosphorylation of ribose at O-5 in a reaction requiring ATP and magnesium. The resulting D-ribose-5-phosphate can then be used either for sythesis of nucleotides, histidine, and tryptophan, or as a component of the pentose phosphate pathway. The polypeptide is Ribokinase (rbsk) (Dictyostelium discoideum (Social amoeba)).